The sequence spans 461 residues: Elongation factor 1-alpha (461 aa).

At Gly2 the chain carries N,N,N-trimethylglycine. The tr-type G domain occupies 5–242 (KIHINIVVIG…DAILPPSRPT (238 aa)). The tract at residues 14–21 (GHVDSGKS) is G1. 14–21 (GHVDSGKS) is a GTP binding site. The G2 stretch occupies residues 70–74 (GITID). A G3 region spans residues 91 to 94 (DAPG). Residues 153–156 (NKMD) and 194–196 (SGW) each bind GTP. A G4 region spans residues 153–156 (NKMD). Residues 194–196 (SGW) are G5. Residues Glu301 and Glu374 each carry the 5-glutamyl glycerylphosphorylethanolamine modification.

The protein belongs to the TRAFAC class translation factor GTPase superfamily. Classic translation factor GTPase family. EF-Tu/EF-1A subfamily.

The protein localises to the cytoplasm. It carries out the reaction GTP + H2O = GDP + phosphate + H(+). In terms of biological role, translation elongation factor that catalyzes the GTP-dependent binding of aminoacyl-tRNA (aa-tRNA) to the A-site of ribosomes during the elongation phase of protein synthesis. Base pairing between the mRNA codon and the aa-tRNA anticodon promotes GTP hydrolysis, releasing the aa-tRNA from EEF1A1 and allowing its accommodation into the ribosome. The growing protein chain is subsequently transferred from the P-site peptidyl tRNA to the A-site aa-tRNA, extending it by one amino acid through ribosome-catalyzed peptide bond formation. This chain is Elongation factor 1-alpha (eef1a), found in Oryzias latipes (Japanese rice fish).